A 281-amino-acid chain; its full sequence is Pantothenate synthetase (281 aa).

ATP is bound at residue 30–37 (MGYLHEGH). The active-site Proton donor is His-37. Gln-61 is a binding site for (R)-pantoate. Gln-61 is a binding site for beta-alanine. 147–150 (GQKD) is an ATP binding site. Gln-153 provides a ligand contact to (R)-pantoate. ATP is bound by residues Val-176 and 184–187 (MSSR).

It belongs to the pantothenate synthetase family. In terms of assembly, homodimer.

Its subcellular location is the cytoplasm. It carries out the reaction (R)-pantoate + beta-alanine + ATP = (R)-pantothenate + AMP + diphosphate + H(+). Its pathway is cofactor biosynthesis; (R)-pantothenate biosynthesis; (R)-pantothenate from (R)-pantoate and beta-alanine: step 1/1. In terms of biological role, catalyzes the condensation of pantoate with beta-alanine in an ATP-dependent reaction via a pantoyl-adenylate intermediate. The protein is Pantothenate synthetase of Caldicellulosiruptor saccharolyticus (strain ATCC 43494 / DSM 8903 / Tp8T 6331).